The sequence spans 325 residues: tRNA U34 carboxymethyltransferase (325 aa).

Carboxy-S-adenosyl-L-methionine-binding positions include lysine 91, tryptophan 105, lysine 110, glycine 130, 152–154, methionine 196, tyrosine 200, and arginine 315; that span reads DPS.

This sequence belongs to the class I-like SAM-binding methyltransferase superfamily. CmoB family. Homotetramer.

The enzyme catalyses carboxy-S-adenosyl-L-methionine + 5-hydroxyuridine(34) in tRNA = 5-carboxymethoxyuridine(34) in tRNA + S-adenosyl-L-homocysteine + H(+). Functionally, catalyzes carboxymethyl transfer from carboxy-S-adenosyl-L-methionine (Cx-SAM) to 5-hydroxyuridine (ho5U) to form 5-carboxymethoxyuridine (cmo5U) at position 34 in tRNAs. The polypeptide is tRNA U34 carboxymethyltransferase (Aeromonas hydrophila subsp. hydrophila (strain ATCC 7966 / DSM 30187 / BCRC 13018 / CCUG 14551 / JCM 1027 / KCTC 2358 / NCIMB 9240 / NCTC 8049)).